The chain runs to 197 residues: Recombination protein RecR (197 aa).

The C4-type zinc finger occupies 57–72; the sequence is CSTCFGITESDPCHLC. The Toprim domain occupies 79-174; sequence ASICVVEEPQ…KVTRLAHGIP (96 aa).

This sequence belongs to the RecR family.

Functionally, may play a role in DNA repair. It seems to be involved in an RecBC-independent recombinational process of DNA repair. It may act with RecF and RecO. The chain is Recombination protein RecR from Geotalea uraniireducens (strain Rf4) (Geobacter uraniireducens).